Reading from the N-terminus, the 448-residue chain is MSKTSARKPLYKSLYAQVIFAVTIGVLLGHFYPQLGTQMKPLGDGFIKLIKMIIAPIIFCTVVVGIAGMEDMKKVGKTGGLALLYFEVMSTLALVVGLLVVNVLQPGTGMHVDPMSLDTKGIAAYTAPGKMQGSVDFLLNVIPSSVVDAFAKGEILQVLLFSVLFGFALHKFGGRGTMVFDFIEKFSHVLFDIVGIIMKVAPIGAFGAMAFTIGKYGLGSLFSLGKLMGAFYLTCLIFVFGVLGIVSRLNGFSVFKFVRYIKEELLIVLGTSSSESVLPRMMEKMENLGARKSVVGLVIPTGYSFNLDGTSIYLTMAAVFIAQATDTPMTLMQQVTLLAVLLLTSKGAAGVTGSGFIVLAATLSAVGGVPVAGLALILGIDRFMSEARALTNLVGNGVATLVVAKWTGDLDMTRLHQGLDNPTTRESQEPEAILDLQVTHMDVMKAKN.

The next 9 helical transmembrane spans lie at 13-33 (SLYA…HFYP), 49-69 (LIKM…IAGM), 81-101 (LALL…LLVV), 149-169 (AFAK…GFAL), 193-213 (IVGI…AFTI), 227-247 (LMGA…GIVS), 294-314 (VVGL…SIYL), 336-356 (TLLA…GSGF), and 357-377 (IVLA…LALI).

Belongs to the dicarboxylate/amino acid:cation symporter (DAACS) (TC 2.A.23) family.

The protein resides in the cell inner membrane. In terms of biological role, responsible for the transport of dicarboxylates such as succinate, fumarate, and malate from the periplasm across the membrane. The sequence is that of C4-dicarboxylate transport protein from Albidiferax ferrireducens (strain ATCC BAA-621 / DSM 15236 / T118) (Rhodoferax ferrireducens).